We begin with the raw amino-acid sequence, 101 residues long: Large ribosomal subunit protein uL24 (101 aa).

The protein belongs to the universal ribosomal protein uL24 family. In terms of assembly, part of the 50S ribosomal subunit.

One of two assembly initiator proteins, it binds directly to the 5'-end of the 23S rRNA, where it nucleates assembly of the 50S subunit. Its function is as follows. One of the proteins that surrounds the polypeptide exit tunnel on the outside of the subunit. The polypeptide is Large ribosomal subunit protein uL24 (Borreliella afzelii (strain PKo) (Borrelia afzelii)).